Consider the following 675-residue polypeptide: E3 ubiquitin-protein ligase COP1 (675 aa).

The disordered stretch occupies residues 1-40; it reads MEEISTDPVVPAVKPDPRTSSVGEGANRHENDDGGSGGSE. Zn(2+) contacts are provided by cysteine 52, cysteine 55, cysteine 67, histidine 69, cysteine 72, cysteine 75, cysteine 86, and cysteine 89. The RING-type zinc finger occupies 52–90; that stretch reads CPICMQIIKDAFLTACGHSFCYMCIITHLRNKSDCPCCS. Residues 67–177 are CLS (cytoplasmic localization signal); that stretch reads CGHSFCYMCI…LDFLHCLRKQ (111 aa). Positions 120–177 are SNLS (subnuclear localization signal); the sequence is ASPLDQFREALQRGCDVSIKEVDNLLTLLAERKRKMEQEEAERNMQILLDFLHCLRKQ. A coiled-coil region spans residues 134 to 201; the sequence is CDVSIKEVDN…IKEDINAVER (68 aa). Positions 261 to 290 are disordered; that stretch reads EGKAQGSSHGLPKKDALSGSDSQSLNQSTV. The span at 279–290 shows a compositional bias: polar residues; that stretch reads GSDSQSLNQSTV. A Bipartite nuclear localization signal motif is present at residues 294–317; that stretch reads RKKRIHAQFNDLQECYLQKRRQLA. WD repeat units lie at residues 369-408, 418-458, 461-501, 503-543, 547-585, 588-627, and 642-675; these read HSANIVSSIEFDRDDELFATAGVSRCIKVFDFSSVVNEPA, STRS…SLME, EHEK…SVIN, DMKA…QPLH, GHKKAVSYVKFLSNNELASASTDSTLRLWDVKDNLPVRT, GHTNEKNFVGLTVNSEYLACGSETNEVYVYHKEITRPVTS, and AGSYFISAVCWKSDSPTMLTANSQGTIKVLVLAA. A binding of human TRIB1 COP1-binding-motif region spans residues 593–595; sequence KNF.

Homodimer. Interacts with HY5, HYH, BBX24/STO, BBX25/STH, CIP8, COP10, SPA1, SPA2, SPA3, SPA4 and UVR8 and phosphorylated PHYA. Light induces dissociation of the SPA1/COP1 complex. Interacts with HRT/RPP8 and triggers it to the 26s proteasome. Binds to CRY2; this competitive interaction prevents triggering to proteasome of other binding proteins. Binds to SHW1 in the nucleus. Bonds to CIP7. Interacts with CSU2. Binds to CIP1. Interacts directly with DHU1. Associates to UNE10/PIF8. Binds directly to PCH1 and PCHL. In terms of processing, autoubiquitinated.

Its subcellular location is the nucleus. It is found in the cytoplasm. The enzyme catalyses S-ubiquitinyl-[E2 ubiquitin-conjugating enzyme]-L-cysteine + [acceptor protein]-L-lysine = [E2 ubiquitin-conjugating enzyme]-L-cysteine + N(6)-ubiquitinyl-[acceptor protein]-L-lysine.. It functions in the pathway protein modification; protein ubiquitination. Its function is as follows. E3 ubiquitin-protein ligase that acts as a repressor of photomorphogenesis and as an activator of etiolation in darkness. E3 ubiquitin ligases accept ubiquitin from an E2 ubiquitin-conjugating enzyme in the form of a thioester and then directly transfers the ubiquitin to targeted substrates. Represses photomorphogenesis in darkness by mediating ubiquitination and subsequent proteasomal degradation of light-induced transcription factors such as HY5, HYH and LAF1. Down-regulates MYB21, probably via ubiquitination process. Light stimuli abrogate the repression of photomorphogenesis, possibly due to its localization to the cytoplasm. Could play a role in switching between skotomorphogenetic and photomorphogenetic pathways. Mediates the ubiquitination-dependent degradation of HY5 in the darkness during seedling development (e.g. hypocotyl growth). Represses CIP7 in darkness. Triggers ubiquitination and subsequent protein degradation of UNE10/PIF8, PCH1 and PCHL in the dark. This Arabidopsis thaliana (Mouse-ear cress) protein is E3 ubiquitin-protein ligase COP1.